The chain runs to 212 residues: Uracil phosphoribosyltransferase (212 aa).

5-phospho-alpha-D-ribose 1-diphosphate contacts are provided by residues arginine 78, arginine 103, and 130 to 138; that span reads DPMLATGSS. Uracil-binding positions include isoleucine 193 and 198–200; that span reads GDA. Aspartate 199 lines the 5-phospho-alpha-D-ribose 1-diphosphate pocket.

This sequence belongs to the UPRTase family. The cofactor is Mg(2+).

The catalysed reaction is UMP + diphosphate = 5-phospho-alpha-D-ribose 1-diphosphate + uracil. Its pathway is pyrimidine metabolism; UMP biosynthesis via salvage pathway; UMP from uracil: step 1/1. With respect to regulation, allosterically activated by GTP. Its function is as follows. Catalyzes the conversion of uracil and 5-phospho-alpha-D-ribose 1-diphosphate (PRPP) to UMP and diphosphate. In Pseudomonas fluorescens (strain ATCC BAA-477 / NRRL B-23932 / Pf-5), this protein is Uracil phosphoribosyltransferase.